Consider the following 354-residue polypeptide: MEITAQMVKELRESTGAGMMDCKKALGEANGDMEKAVDILREKGLGQAAKKADRLASEGLVSVEVCSKCKKATISEINSETDFVARNPQFQALAKDTTAHIQSSGIKTVEELNTSTLNGVKFEEYFKTQIATIGENLVVRRFETISADDKGVVNGYVHSNGRVGVLIGAACESAEVANKAAEFIRNLCMHAAAMKPSVISYKDLDKDFVEKEFIALRAELEKENEELKRLGKPLHHIPEYASRCQIGEAELAKATKAIEEELKAEGKPEKIWDKIIPGKIERFYADNTVLDQRLTLLGQFYVMDDKKTIEQVIEEKSKELGGKIEIVKYVRFELGEGLEKKVDDFAAEVAAQIG.

The tract at residues 81–84 (TDFV) is involved in Mg(2+) ion dislocation from EF-Tu.

It belongs to the EF-Ts family.

It is found in the cytoplasm. Its function is as follows. Associates with the EF-Tu.GDP complex and induces the exchange of GDP to GTP. It remains bound to the aminoacyl-tRNA.EF-Tu.GTP complex up to the GTP hydrolysis stage on the ribosome. This is Elongation factor Ts from Campylobacter concisus (strain 13826).